The sequence spans 61 residues: Small ribosomal subunit protein uS14 (61 aa).

Zn(2+) is bound by residues C24, C27, C40, and C43.

The protein belongs to the universal ribosomal protein uS14 family. Zinc-binding uS14 subfamily. Part of the 30S ribosomal subunit. Contacts proteins S3 and S10. Requires Zn(2+) as cofactor.

In terms of biological role, binds 16S rRNA, required for the assembly of 30S particles and may also be responsible for determining the conformation of the 16S rRNA at the A site. The protein is Small ribosomal subunit protein uS14 of Frankia alni (strain DSM 45986 / CECT 9034 / ACN14a).